The sequence spans 77 residues: Ribonuclease P protein component 1 (77 aa).

This sequence belongs to the eukaryotic/archaeal RNase P protein component 1 family. In terms of assembly, consists of a catalytic RNA component and at least 4-5 protein subunits.

It is found in the cytoplasm. It carries out the reaction Endonucleolytic cleavage of RNA, removing 5'-extranucleotides from tRNA precursor.. Part of ribonuclease P, a protein complex that generates mature tRNA molecules by cleaving their 5'-ends. The protein is Ribonuclease P protein component 1 of Sulfurisphaera tokodaii (strain DSM 16993 / JCM 10545 / NBRC 100140 / 7) (Sulfolobus tokodaii).